Consider the following 260-residue polypeptide: COP9 signalosome complex subunit 7 (260 aa).

Positions 1 to 159 constitute a PCI domain; that stretch reads MDIEQKQAEI…RCFEVPFAAG (159 aa). Residues 228–260 form a disordered region; it reads IRGNKEMFGEPSGVMDYEEDGIRPKRRRHPVTR. The segment covering 251–260 has biased composition (basic residues); it reads PKRRRHPVTR.

The protein belongs to the CSN7/EIF3M family. CSN7 subfamily. As to quaternary structure, component of the CSN complex, probably composed of CSN1, CSN2, CSN3, CSN4, CSN5 (CSN5A or CSN5B), CSN6 (CSN6A or CSN6B), CSN7 and CSN8. In the CSN complex, it probably interacts directly with CSN4. Interacts (via PCI domain) with CSN1 (via PCI domain) and CSN8 (via PCI domain), and (via C-terminal tail) with CSN6A, TSO2 and RNR2A. Cannot interact simultaneously with CSN1 and CSN8 to form ternary complexes. Also exists as a monomeric form. Binds to the translation initiation factors TIF3E1 and TIF3H1. In terms of processing, phosphorylated.

The protein resides in the cytoplasm. The protein localises to the nucleus. In terms of biological role, component of the COP9 signalosome complex (CSN), a complex involved in various cellular and developmental processes such as photomorphogenesis and auxin and jasmonate responses. The CSN complex is an essential regulator of the ubiquitin (Ubl) conjugation pathway by mediating the deneddylation of the cullin subunits of SCF-type E3 ligase complexes, leading to decrease the Ubl ligase activity of SCF. It is involved in repression of photomorphogenesis in darkness by regulating the activity of COP1-containing Ubl ligase complexes. The complex is also required for degradation of IAA6 by regulating the activity of the Ubl ligase SCF-TIR complex. Regulates the TSO2 subcellular localization. May be involved in nucleic acid binding. The polypeptide is COP9 signalosome complex subunit 7 (CSN7) (Arabidopsis thaliana (Mouse-ear cress)).